We begin with the raw amino-acid sequence, 697 residues long: Glycine--tRNA ligase beta subunit (697 aa).

This sequence belongs to the class-II aminoacyl-tRNA synthetase family. Tetramer of two alpha and two beta subunits.

The protein resides in the cytoplasm. The catalysed reaction is tRNA(Gly) + glycine + ATP = glycyl-tRNA(Gly) + AMP + diphosphate. In Solidesulfovibrio magneticus (strain ATCC 700980 / DSM 13731 / RS-1) (Desulfovibrio magneticus), this protein is Glycine--tRNA ligase beta subunit.